The primary structure comprises 273 residues: Phosphate import ATP-binding protein PstB (273 aa).

Positions 17 to 259 constitute an ABC transporter domain; sequence LSAENLSIFY…DKTNNIFQNP (243 aa). 49–56 lines the ATP pocket; sequence GPSGCGKS.

The protein belongs to the ABC transporter superfamily. Phosphate importer (TC 3.A.1.7) family. As to quaternary structure, the complex is composed of two ATP-binding proteins (PstB), two transmembrane proteins (PstC and PstA) and a solute-binding protein (PstS).

Its subcellular location is the cell inner membrane. It carries out the reaction phosphate(out) + ATP + H2O = ADP + 2 phosphate(in) + H(+). Its function is as follows. Part of the ABC transporter complex PstSACB involved in phosphate import. Responsible for energy coupling to the transport system. The sequence is that of Phosphate import ATP-binding protein PstB from Trichodesmium erythraeum (strain IMS101).